A 340-amino-acid polypeptide reads, in one-letter code: Histidinol-phosphate aminotransferase (340 aa).

Lys204 is subject to N6-(pyridoxal phosphate)lysine.

Belongs to the class-II pyridoxal-phosphate-dependent aminotransferase family. Histidinol-phosphate aminotransferase subfamily. Pyridoxal 5'-phosphate serves as cofactor.

The enzyme catalyses L-histidinol phosphate + 2-oxoglutarate = 3-(imidazol-4-yl)-2-oxopropyl phosphate + L-glutamate. It participates in amino-acid biosynthesis; L-histidine biosynthesis; L-histidine from 5-phospho-alpha-D-ribose 1-diphosphate: step 7/9. In Thermococcus gammatolerans (strain DSM 15229 / JCM 11827 / EJ3), this protein is Histidinol-phosphate aminotransferase.